Reading from the N-terminus, the 636-residue chain is 1-deoxy-D-xylulose-5-phosphate synthase (636 aa).

Thiamine diphosphate is bound by residues His-74 and 115–117; that span reads GHS. Asp-146 is a binding site for Mg(2+). Residues 147–148, Asn-175, Tyr-286, and Glu-367 each bind thiamine diphosphate; that span reads GA. Asn-175 is a Mg(2+) binding site.

The protein belongs to the transketolase family. DXPS subfamily. As to quaternary structure, homodimer. It depends on Mg(2+) as a cofactor. Thiamine diphosphate serves as cofactor.

It carries out the reaction D-glyceraldehyde 3-phosphate + pyruvate + H(+) = 1-deoxy-D-xylulose 5-phosphate + CO2. The protein operates within metabolic intermediate biosynthesis; 1-deoxy-D-xylulose 5-phosphate biosynthesis; 1-deoxy-D-xylulose 5-phosphate from D-glyceraldehyde 3-phosphate and pyruvate: step 1/1. Its function is as follows. Catalyzes the acyloin condensation reaction between C atoms 2 and 3 of pyruvate and glyceraldehyde 3-phosphate to yield 1-deoxy-D-xylulose-5-phosphate (DXP). In Halothermothrix orenii (strain H 168 / OCM 544 / DSM 9562), this protein is 1-deoxy-D-xylulose-5-phosphate synthase.